Consider the following 433-residue polypeptide: tRNA modification GTPase MnmE (433 aa).

Residues Arg-24, Glu-86, and Lys-125 each coordinate (6S)-5-formyl-5,6,7,8-tetrahydrofolate. The TrmE-type G domain maps to 218–363; it reads GARLALIGAP…LKEALREALL (146 aa). Residue Asn-228 participates in K(+) binding. Residues 228–233, 247–253, and 272–275 each bind GTP; these read NAGKSS, SPIPGTT, and DTAG. Ser-232 contributes to the Mg(2+) binding site. K(+) is bound by residues Ser-247, Ile-249, and Thr-252. Thr-253 serves as a coordination point for Mg(2+). Lys-433 is a (6S)-5-formyl-5,6,7,8-tetrahydrofolate binding site.

The protein belongs to the TRAFAC class TrmE-Era-EngA-EngB-Septin-like GTPase superfamily. TrmE GTPase family. As to quaternary structure, homodimer. Heterotetramer of two MnmE and two MnmG subunits. K(+) is required as a cofactor.

It localises to the cytoplasm. Functionally, exhibits a very high intrinsic GTPase hydrolysis rate. Involved in the addition of a carboxymethylaminomethyl (cmnm) group at the wobble position (U34) of certain tRNAs, forming tRNA-cmnm(5)s(2)U34. In Thermus thermophilus (strain ATCC BAA-163 / DSM 7039 / HB27), this protein is tRNA modification GTPase MnmE.